A 206-amino-acid polypeptide reads, in one-letter code: Isochorismatase family protein 1B (206 aa).

Belongs to the isochorismatase family.

The sequence is that of Isochorismatase family protein 1B from Dictyostelium discoideum (Social amoeba).